The primary structure comprises 250 residues: Phosphoribosylaminoimidazole-succinocarboxamide synthase (250 aa).

The protein belongs to the SAICAR synthetase family.

The enzyme catalyses 5-amino-1-(5-phospho-D-ribosyl)imidazole-4-carboxylate + L-aspartate + ATP = (2S)-2-[5-amino-1-(5-phospho-beta-D-ribosyl)imidazole-4-carboxamido]succinate + ADP + phosphate + 2 H(+). Its pathway is purine metabolism; IMP biosynthesis via de novo pathway; 5-amino-1-(5-phospho-D-ribosyl)imidazole-4-carboxamide from 5-amino-1-(5-phospho-D-ribosyl)imidazole-4-carboxylate: step 1/2. This Bifidobacterium longum (strain DJO10A) protein is Phosphoribosylaminoimidazole-succinocarboxamide synthase.